A 304-amino-acid chain; its full sequence is C-type lectin domain family 10 member A (304 aa).

Residues 1-35 lie on the Cytoplasmic side of the membrane; sequence MIYENLQNSRIEEKTQEPGKAPSQSFLWRILSWTH. The chain crosses the membrane as a helical; Signal-anchor for type II membrane protein span at residues 36-56; the sequence is LLLFSLGLSLLLLVVVSVIGS. The Extracellular portion of the chain corresponds to 57–304; that stretch reads QNSQLRRDLG…ICEMKLAKES (248 aa). N-linked (GlcNAc...) asparagine glycans are attached at residues Asn74 and Asn166. One can recognise a C-type lectin domain in the interval 172-298; that stretch reads CCPLHWTEHE…QRTFRWICEM (127 aa). Intrachain disulfides connect Cys173–Cys184, Cys201–Cys296, and Cys274–Cys288.

In terms of assembly, homooligomer. Interacts with SIGLEC1, which may act as a counter-receptor for CLEC10A in lymph node. Detected in lymph node in the subcapsular sinus, interfollicular regions, T and B-cell boundary and in the areas surrounding high endothelial venules (at protein level). Expressed on the surface of activated macrophages. Expressed in heart, lung, testis, skeletal muscle, spleen, brain, kidney and thymus. Expressed in P388, RAW 264.7 and M1 cell lines.

The protein resides in the membrane. Functionally, recognizes terminal galactose and N-acetylgalactosamine units. May participate in the interaction between tumoricidal macrophages and tumor cells. Plays a role in the recruitment of inflammatory monocytes to adipose tissue in diet-induced obesity. The protein is C-type lectin domain family 10 member A (Clec10a) of Mus musculus (Mouse).